A 220-amino-acid chain; its full sequence is UPF0319 protein YccT (220 aa).

Residues 1-20 (MKTGIVTTLIALCLPVSVFA) form the signal peptide.

The protein belongs to the UPF0319 family.

This chain is UPF0319 protein YccT, found in Shigella flexneri serotype 5b (strain 8401).